The primary structure comprises 134 residues: Cell division protein SepF 1 (134 aa).

It belongs to the SepF family. In terms of assembly, homodimer. Interacts with FtsZ.

The protein localises to the cytoplasm. Cell division protein that is part of the divisome complex and is recruited early to the Z-ring. Probably stimulates Z-ring formation, perhaps through the cross-linking of FtsZ protofilaments. Its function overlaps with FtsA. The protein is Cell division protein SepF 1 of Streptomyces avermitilis (strain ATCC 31267 / DSM 46492 / JCM 5070 / NBRC 14893 / NCIMB 12804 / NRRL 8165 / MA-4680).